The sequence spans 672 residues: Acetoacetyl-CoA synthetase (672 aa).

Belongs to the ATP-dependent AMP-binding enzyme family.

Its subcellular location is the cytoplasm. It localises to the cytosol. It catalyses the reaction acetoacetate + ATP + CoA = acetoacetyl-CoA + AMP + diphosphate. In terms of biological role, converts acetoacetate to acetoacetyl-CoA in the cytosol. Ketone body-utilizing enzyme, responsible for the synthesis of cholesterol and fatty acids. The sequence is that of Acetoacetyl-CoA synthetase (Aacs) from Mus musculus (Mouse).